Consider the following 335-residue polypeptide: Phosphatidylcholine:ceramide cholinephosphotransferase 2 (335 aa).

A run of 5 helical transmembrane segments spans residues 60–80, 104–124, 136–156, 200–220, and 229–249; these read LTAF…LTVI, WSVG…IIFL, FLLG…TFLP, ILCG…MYFV, and LVIL…ALVV. The active site involves His210. Catalysis depends on residues His253 and Asp257. A helical transmembrane segment spans residues 258 to 278; sequence VLIAYWLTSHVFWSYHQIFEM. Residues 279-335 are Cytoplasmic-facing; that stretch reads RKDDRPQAPLSRLWWFWLCYWFESDVADGKLVNKWNWPLEGPQRMHTIMNRINYKLQ.

This sequence belongs to the sphingomyelin synthase family.

Its subcellular location is the membrane. The enzyme catalyses an N-acylsphing-4-enine + a 1,2-diacyl-sn-glycero-3-phosphocholine = a sphingomyelin + a 1,2-diacyl-sn-glycerol. It carries out the reaction an N-acyl-15-methylhexadecasphing-4-enine + a 1,2-diacyl-sn-glycero-3-phosphocholine = an N-acyl-15-methylhexadecasphing-4-enine-1-phosphocholine + a 1,2-diacyl-sn-glycerol. The protein operates within lipid metabolism; sphingolipid metabolism. In terms of biological role, sphingomyelin synthases (SM synthase or SMS) synthesize the sphingolipid sphingomyelin (SM) through transfer of the phosphatidyl head group of 1,2-diacyl-sn-glycero-3-phosphocholine (phosphatidylcholine, PC) on to the primary hydroxyl of ceramide (N-acylsphingoid base), yielding 1,2-diacyl-sn-glycerol (diacylglycerol, DAG) as a side product. Functions as a bidirectional lipid cholinephosphotransferases capable of converting PC and ceramide to SM and DAG and vice versa depending on the respective levels of ceramide and DAG as phosphocholine acceptors, respectively. This Caenorhabditis elegans protein is Phosphatidylcholine:ceramide cholinephosphotransferase 2 (sms-2).